The sequence spans 162 residues: Ribosome maturation factor RimP (162 aa).

It belongs to the RimP family.

Its subcellular location is the cytoplasm. Required for maturation of 30S ribosomal subunits. This is Ribosome maturation factor RimP from Syntrophotalea carbinolica (strain DSM 2380 / NBRC 103641 / GraBd1) (Pelobacter carbinolicus).